We begin with the raw amino-acid sequence, 183 residues long: Ras-related protein Rap-2c (183 aa).

Residue 10-17 (GSGGVGKS) participates in GTP binding. Residues 32 to 40 (YDPTIEDFY) carry the Effector region motif. Residues 57 to 61 (DTAGT) and 116 to 119 (NKVD) contribute to the GTP site. S-palmitoyl cysteine attachment occurs at residues Cys176 and Cys177. Cys180 bears the Cysteine methyl ester mark. Cys180 is lipidated: S-geranylgeranyl cysteine. The propeptide at 181 to 183 (VVQ) is removed in mature form.

It belongs to the small GTPase superfamily. Ras family. In terms of processing, palmitoylated. Palmitoylation is required for association with recycling endosome membranes and activation of TNIK.

It is found in the cytoplasm. The protein localises to the recycling endosome membrane. The enzyme catalyses GTP + H2O = GDP + phosphate + H(+). Its function is as follows. Small GTP-binding protein which cycles between a GDP-bound inactive and a GTP-bound active form. May play a role in cytoskeletal rearrangements and regulate cell spreading through activation of the effector TNIK. May play a role in SRE-mediated gene transcription. This is Ras-related protein Rap-2c (RAP2C) from Bos taurus (Bovine).